Consider the following 178-residue polypeptide: Translation initiation factor IF-3 (178 aa).

It belongs to the IF-3 family. In terms of assembly, monomer.

It localises to the cytoplasm. Functionally, IF-3 binds to the 30S ribosomal subunit and shifts the equilibrium between 70S ribosomes and their 50S and 30S subunits in favor of the free subunits, thus enhancing the availability of 30S subunits on which protein synthesis initiation begins. This is Translation initiation factor IF-3 from Nautilia profundicola (strain ATCC BAA-1463 / DSM 18972 / AmH).